A 1391-amino-acid chain; its full sequence is DNA-directed RNA polymerase subunit beta' (1391 aa).

Zn(2+)-binding residues include Cys72, Cys74, Cys87, and Cys90. 3 residues coordinate Mg(2+): Asp462, Asp464, and Asp466. 4 residues coordinate Zn(2+): Cys816, Cys890, Cys897, and Cys900.

It belongs to the RNA polymerase beta' chain family. The RNAP catalytic core consists of 2 alpha, 1 beta, 1 beta' and 1 omega subunit. When a sigma factor is associated with the core the holoenzyme is formed, which can initiate transcription. It depends on Mg(2+) as a cofactor. The cofactor is Zn(2+).

It carries out the reaction RNA(n) + a ribonucleoside 5'-triphosphate = RNA(n+1) + diphosphate. Its function is as follows. DNA-dependent RNA polymerase catalyzes the transcription of DNA into RNA using the four ribonucleoside triphosphates as substrates. In Neisseria meningitidis serogroup C / serotype 2a (strain ATCC 700532 / DSM 15464 / FAM18), this protein is DNA-directed RNA polymerase subunit beta'.